The sequence spans 502 residues: Glycerol kinase (502 aa).

Thr-14 contributes to the ADP binding site. ATP is bound by residues Thr-14, Thr-15, and Ser-16. Sn-glycerol 3-phosphate is bound at residue Thr-14. ADP is bound at residue Arg-18. Sn-glycerol 3-phosphate is bound by residues Arg-84, Glu-85, and Tyr-136. Arg-84, Glu-85, and Tyr-136 together coordinate glycerol. Residue His-232 is modified to Phosphohistidine; by HPr. Asp-246 contributes to the sn-glycerol 3-phosphate binding site. The glycerol site is built by Asp-246 and Gln-247. Positions 268 and 311 each coordinate ADP. The ATP site is built by Thr-268, Gly-311, Gln-315, and Gly-412. ADP-binding residues include Gly-412 and Asn-416.

This sequence belongs to the FGGY kinase family. As to quaternary structure, homotetramer and homodimer (in equilibrium). Post-translationally, the phosphoenolpyruvate-dependent sugar phosphotransferase system (PTS), including enzyme I, and histidine-containing protein (HPr) are required for the phosphorylation, which leads to the activation of the enzyme.

It catalyses the reaction glycerol + ATP = sn-glycerol 3-phosphate + ADP + H(+). Its pathway is polyol metabolism; glycerol degradation via glycerol kinase pathway; sn-glycerol 3-phosphate from glycerol: step 1/1. With respect to regulation, activated by phosphorylation and inhibited by fructose 1,6-bisphosphate (FBP). Key enzyme in the regulation of glycerol uptake and metabolism. Catalyzes the phosphorylation of glycerol to yield sn-glycerol 3-phosphate. In Streptococcus gordonii (strain Challis / ATCC 35105 / BCRC 15272 / CH1 / DL1 / V288), this protein is Glycerol kinase.